We begin with the raw amino-acid sequence, 116 residues long: Guanylin (116 aa).

Residues 1–23 (MNACVLSVLCLLGALAVLVEGVT) form the signal peptide. Positions 24 to 101 (VQDGDLSFPL…LQRLEAIAQD (78 aa)) are excised as a propeptide. Disulfide bonds link Cys69–Cys83, Cys105–Cys113, and Cys108–Cys116.

It belongs to the guanylin family. As to expression, localized in both crypts and villi in the small intestine and to superficial epithelial cells in the colon.

Its subcellular location is the secreted. Endogenous activator of intestinal guanylate cyclase. It stimulates this enzyme through the same receptor binding region as the heat-stable enterotoxins. This chain is Guanylin (Guca2a), found in Mus musculus (Mouse).